Consider the following 402-residue polypeptide: Speedy protein E2B (402 aa).

A disordered region spans residues 1-89; it reads MDRTETRFRK…EEPEKELAPE (89 aa). The span at 16–39 shows a compositional bias: polar residues; it reads GKITTSRQPHPQNEQSPQRSTSGY. Residues 76–89 show a composition bias toward acidic residues; it reads DESEEEPEKELAPE.

Belongs to the Speedy/Ringo family.

The sequence is that of Speedy protein E2B (SPDYE2B) from Homo sapiens (Human).